Reading from the N-terminus, the 281-residue chain is General control transcription factor GCN4 (281 aa).

The residue at position 17 (Ser-17) is a Phosphoserine. Required for transcriptional activation regions lie at residues Leu-89–Ser-100 and Pro-106–Asp-125. Residue Thr-165 is modified to Phosphothreonine; by PHO85. The short motif at Val-167 to Leu-200 is the Nuclear localization signal element. The interval Leu-217–Gln-248 is disordered. Residue Ser-218 is modified to Phosphoserine. The region spanning Ser-225–Arg-281 is the bZIP domain. The short motif at Lys-231–Arg-249 is the Nuclear localization signal element. The tract at residues Lys-231–Lys-251 is basic motif. Positions Leu-253–Leu-274 are leucine-zipper.

This sequence belongs to the bZIP family. GCN4 subfamily. Homodimer. Each subunit binds overlapping and non-identical half-sites that flank the central CG base-pair in the pseudo-palindromic motif 5'-ATGA[CG]TCAT-3'. Interacts with the mediator tail; the interaction with GAL11/MED15 is direct. Interacts with the SAGA histone acetyltransferase complex. Interacts with the SWI/SNF chromatin remodeling complex. Phosphorylated by the cyclin-CDK PCL5-PHO85. Phosphorylation of Thr-165 induces degradation of GCN4 by the E3 ubiquitin ligase complex SCF(Cdc4).

It localises to the nucleus. Functionally, master transcriptional regulator that mediates the response to amino acid starvation. Binds variations of the DNA sequence 5'-ATGA[CG]TCAT-3' in canonical nucleosome-depleted 5'-positioned promoters, and also within coding sequences and 3' non-coding regions. During nutrient starvation (low or poor amino acid, carbon or purine sources), it activates genes required for amino acid biosynthesis and transport, autophagy, cofactor biosynthesis and transport, mitochondrial transport, and additional downstream transcription factors. Activates transcription by recruiting multiple coactivators, including the mediator complex, the SAGA complex, and the SWI/SNF complex, to enable assembly of the pre-initiation complex at core promoters. This Saccharomyces cerevisiae (strain ATCC 204508 / S288c) (Baker's yeast) protein is General control transcription factor GCN4.